Reading from the N-terminus, the 78-residue chain is Conotoxin Bu2 (78 aa).

The first 19 residues, methionine 1 to alanine 19, serve as a signal peptide directing secretion. Residues aspartate 20–arginine 41 constitute a propeptide that is removed on maturation. Cystine bridges form between cysteine 46–cysteine 59, cysteine 53–cysteine 64, and cysteine 58–cysteine 73.

Belongs to the conotoxin O1 superfamily. Expressed by the venom duct.

The protein resides in the secreted. The sequence is that of Conotoxin Bu2 from Conus bullatus (Bubble cone).